Here is a 218-residue protein sequence, read N- to C-terminus: Adenylate kinase (218 aa).

ATP is bound at residue 10–15 (GAGKGT). The segment at 30–59 (STGDMLRAAINEGTPLGLEAKKVMDAGKLV) is NMP. Residues T31, R36, 57–59 (KLV), 85–88 (GFPR), and Q92 contribute to the AMP site. The interval 122–159 (GRRVHPASGRTYHVLFNPPAKEGVDDITGDPLVQREDD) is LID. ATP-binding positions include R123 and 132 to 133 (TY). Residues R156 and R167 each contribute to the AMP site. Residue G203 participates in ATP binding.

It belongs to the adenylate kinase family. In terms of assembly, monomer.

It is found in the cytoplasm. It carries out the reaction AMP + ATP = 2 ADP. It functions in the pathway purine metabolism; AMP biosynthesis via salvage pathway; AMP from ADP: step 1/1. Functionally, catalyzes the reversible transfer of the terminal phosphate group between ATP and AMP. Plays an important role in cellular energy homeostasis and in adenine nucleotide metabolism. In Chlorobium phaeobacteroides (strain BS1), this protein is Adenylate kinase.